An 863-amino-acid polypeptide reads, in one-letter code: Glycerol-3-phosphate acyltransferase (863 aa).

The segment at 1 to 29 (MPKKNSPLLPKETTTTQSSVDTSGSSNLT) is disordered. Positions 12 to 29 (ETTTTQSSVDTSGSSNLT) are enriched in polar residues. Positions 343-348 (SHRSHM) match the HXXXXD motif motif.

The protein belongs to the GPAT/DAPAT family.

The protein localises to the cell inner membrane. It catalyses the reaction sn-glycerol 3-phosphate + an acyl-CoA = a 1-acyl-sn-glycero-3-phosphate + CoA. Its pathway is phospholipid metabolism; CDP-diacylglycerol biosynthesis; CDP-diacylglycerol from sn-glycerol 3-phosphate: step 1/3. This is Glycerol-3-phosphate acyltransferase from Xylella fastidiosa (strain M23).